Here is a 167-residue protein sequence, read N- to C-terminus: Protein-lysine myristoyltransferase RtxC (167 aa).

Catalysis depends on residues H20 and D89.

The protein belongs to the RTX toxin acyltransferase family.

Its subcellular location is the cytoplasm. It catalyses the reaction tetradecanoyl-[ACP] + L-lysyl-[protein] = N(6)-tetradecanoyl-L-lysyl-[protein] + holo-[ACP] + H(+). Protein-lysine myristoyltransferase that catalyzes myristoylation of the protoxin (RtxA) at two internal lysine residues, thereby converting it to the active toxin. This is Protein-lysine myristoyltransferase RtxC from Kingella kingae.